A 427-amino-acid chain; its full sequence is MTAIVDIIGREILDSRGNPTVEVDVVLEDGAVGRAAVPSGASTGAHEAVELRDGDKGRYGGKGVQKAVEAINGELFDALGGMDAESQVQIDEVMIALDGTPNKARLGANAILGISLAVAKAAAESYDMPLYRYVGGTSARMLPVPMMNIINGGMHADNPIDFQEFMIMPVGADSFSEALRCGAEIFHTLKSELKKAGHNTNVGDEGGFAPNLPSADAALDFVMAAITKAGYKPGEDVMLALDCAATEFFKDGAYVYGGENKTRSVSEQAKYLADLAARYPIVSIEDGMSEDDMDGWKELTDIVGSKCQLVGDDLFVTNVTRLADGIKNGRANSILIKVNQIGTLTETLAAVEMAHKAGYTAVMSHRSGETEDSTIADLAVATNCGQIKTGSLARADRTSKYNQLLRIEQELGSQALYAGKAALKALR.

Glutamine 163 contributes to the (2R)-2-phosphoglycerate binding site. Glutamate 205 functions as the Proton donor in the catalytic mechanism. Mg(2+)-binding residues include aspartate 242, glutamate 285, and aspartate 312. (2R)-2-phosphoglycerate-binding residues include lysine 337, arginine 366, serine 367, and lysine 388. Lysine 337 functions as the Proton acceptor in the catalytic mechanism.

This sequence belongs to the enolase family. It depends on Mg(2+) as a cofactor.

It localises to the cytoplasm. Its subcellular location is the secreted. It is found in the cell surface. The enzyme catalyses (2R)-2-phosphoglycerate = phosphoenolpyruvate + H2O. Its pathway is carbohydrate degradation; glycolysis; pyruvate from D-glyceraldehyde 3-phosphate: step 4/5. Functionally, catalyzes the reversible conversion of 2-phosphoglycerate (2-PG) into phosphoenolpyruvate (PEP). It is essential for the degradation of carbohydrates via glycolysis. The protein is Enolase of Rhodopseudomonas palustris (strain BisA53).